Reading from the N-terminus, the 336-residue chain is MIKEAIYQLVNKEDLSYEVAEQVMDEIMSGEASNVLIGSYLTALRMKGETIDEITASAAGMRKHCVRLLHNMDVLEIVGTGGDEANTFNISTTTGFVVSAAGIPVAKHGNRCVSSKCGAADVLEALGVNIMLAPLESAKILEEMGLCFMFAQTYHSAMKFVAPVRRELGIRTIFNILGPLANPAGANLELLGVYEEALVKPLARVLLKLGVKRGMVVYGRDGLDEISLSHQTVCCKIRDGKLYDYILEPEQIGLTKCKKEDLVGGSPAENAAITRAILNGEKGPKRDAVIFNAAACIYMVRDDITLQEAAKIATDIIDSKKAIHQLDKFIELSNRR.

5-phospho-alpha-D-ribose 1-diphosphate-binding positions include G79, 82–83, T87, 89–92, 107–115, and A119; these read GD, NIST, and KHGNRCVSS. Position 79 (G79) interacts with anthranilate. S91 is a Mg(2+) binding site. Position 110 (N110) interacts with anthranilate. R165 serves as a coordination point for anthranilate. 2 residues coordinate Mg(2+): D224 and E225.

It belongs to the anthranilate phosphoribosyltransferase family. Homodimer. The cofactor is Mg(2+).

The catalysed reaction is N-(5-phospho-beta-D-ribosyl)anthranilate + diphosphate = 5-phospho-alpha-D-ribose 1-diphosphate + anthranilate. It functions in the pathway amino-acid biosynthesis; L-tryptophan biosynthesis; L-tryptophan from chorismate: step 2/5. In terms of biological role, catalyzes the transfer of the phosphoribosyl group of 5-phosphorylribose-1-pyrophosphate (PRPP) to anthranilate to yield N-(5'-phosphoribosyl)-anthranilate (PRA). The protein is Anthranilate phosphoribosyltransferase of Lachnoclostridium phytofermentans (strain ATCC 700394 / DSM 18823 / ISDg) (Clostridium phytofermentans).